A 100-amino-acid chain; its full sequence is MSFGIFHRILWLFLCANTLIVYLVTGSISDAVVTTMVGSLLLQLTYFANVLFLLWRAHCARRARQTTGQFHGEEQPGDPRIAGTHGRTDGDPCFEDEDSR.

Helical transmembrane passes span 9–29 and 35–55; these read ILWLFLCANTLIVYLVTGSIS and TMVGSLLLQLTYFANVLFLLW. The segment at 66 to 100 is disordered; the sequence is TTGQFHGEEQPGDPRIAGTHGRTDGDPCFEDEDSR.

To Rhizobium exopolysaccharide production repressor protein (ExoX).

It is found in the cell membrane. Functionally, could be involved in the inhibition of exopolysaccharide synthesis (EPS) and nodulation ability (nod). In Sinorhizobium fredii (strain NBRC 101917 / NGR234), this protein is Putative exopolysaccharide production repressor protein y4xQ.